Reading from the N-terminus, the 293-residue chain is Ribosomal protein L11 methyltransferase (293 aa).

Thr-145, Gly-166, Asp-188, and Asn-230 together coordinate S-adenosyl-L-methionine.

The protein belongs to the methyltransferase superfamily. PrmA family.

Its subcellular location is the cytoplasm. The enzyme catalyses L-lysyl-[protein] + 3 S-adenosyl-L-methionine = N(6),N(6),N(6)-trimethyl-L-lysyl-[protein] + 3 S-adenosyl-L-homocysteine + 3 H(+). Functionally, methylates ribosomal protein L11. This is Ribosomal protein L11 methyltransferase from Escherichia coli O81 (strain ED1a).